Reading from the N-terminus, the 311-residue chain is MQELRFVLIVVGALAIMALLFHGLWTSKKEGKAKFGDKPLSKLDLGESEPKESEMYVAPEDDYEIIRKERKEPAFEDEKPFSTSGVIGDPLIDDLHSGQDKENKFSQPKFDDDITVAEAEAAASIEQDAPAWVEQPQEIDEPLTHHPDEIDAFSGEETIVELDEPISKTVEPELQVIVLNVHCAGDSPFVGTKLFDSMQQNGLVYGEMDIFHRHLDMSGTGKVLFSVANMMHPGTLKHDDPAEFSTKGISFFMTLPCYGEADQNFNLMLKTAQKIADDLGGNVLDDKRNLMTPDRLAGYRRQIVEFKAANA.

Over 1 to 5 (MQELR) the chain is Periplasmic. A helical membrane pass occupies residues 6-26 (FVLIVVGALAIMALLFHGLWT). Residues 27–311 (SKKEGKAKFG…QIVEFKAANA (285 aa)) lie on the Cytoplasmic side of the membrane. A compositionally biased stretch (basic and acidic residues) spans 32-54 (KAKFGDKPLSKLDLGESEPKESE). The interval 32 to 60 (KAKFGDKPLSKLDLGESEPKESEMYVAPE) is disordered.

It belongs to the ZipA family. In terms of assembly, interacts with FtsZ via their C-terminal domains.

Its subcellular location is the cell inner membrane. Functionally, essential cell division protein that stabilizes the FtsZ protofilaments by cross-linking them and that serves as a cytoplasmic membrane anchor for the Z ring. Also required for the recruitment to the septal ring of downstream cell division proteins. The polypeptide is Cell division protein ZipA (Vibrio vulnificus (strain YJ016)).